The following is a 187-amino-acid chain: Protein GrpE (187 aa).

The disordered stretch occupies residues 1–25 (MADEQNLDNRAPEETPAAEGTSAGE).

It belongs to the GrpE family. As to quaternary structure, homodimer.

The protein localises to the cytoplasm. Functionally, participates actively in the response to hyperosmotic and heat shock by preventing the aggregation of stress-denatured proteins, in association with DnaK and GrpE. It is the nucleotide exchange factor for DnaK and may function as a thermosensor. Unfolded proteins bind initially to DnaJ; upon interaction with the DnaJ-bound protein, DnaK hydrolyzes its bound ATP, resulting in the formation of a stable complex. GrpE releases ADP from DnaK; ATP binding to DnaK triggers the release of the substrate protein, thus completing the reaction cycle. Several rounds of ATP-dependent interactions between DnaJ, DnaK and GrpE are required for fully efficient folding. The polypeptide is Protein GrpE (Azotobacter vinelandii (strain DJ / ATCC BAA-1303)).